The chain runs to 108 residues: Trp operon repressor homolog (108 aa).

A DNA-binding region spans residues 59–82 (QRQISQLLGVGVATITRGSNELKS).

The protein belongs to the TrpR family. Homodimer.

Its subcellular location is the cytoplasm. In terms of biological role, this protein is an aporepressor. When complexed with L-tryptophan it binds the operator region of the trp operon and prevents the initiation of transcription. In Aliivibrio salmonicida (strain LFI1238) (Vibrio salmonicida (strain LFI1238)), this protein is Trp operon repressor homolog.